A 227-amino-acid chain; its full sequence is NAD(P)H-quinone oxidoreductase subunit K, chloroplastic (227 aa).

Positions 43, 44, 108, and 139 each coordinate [4Fe-4S] cluster.

The protein belongs to the complex I 20 kDa subunit family. In terms of assembly, NDH is composed of at least 16 different subunits, 5 of which are encoded in the nucleus. It depends on [4Fe-4S] cluster as a cofactor.

It localises to the plastid. The protein localises to the chloroplast thylakoid membrane. The catalysed reaction is a plastoquinone + NADH + (n+1) H(+)(in) = a plastoquinol + NAD(+) + n H(+)(out). It catalyses the reaction a plastoquinone + NADPH + (n+1) H(+)(in) = a plastoquinol + NADP(+) + n H(+)(out). Functionally, NDH shuttles electrons from NAD(P)H:plastoquinone, via FMN and iron-sulfur (Fe-S) centers, to quinones in the photosynthetic chain and possibly in a chloroplast respiratory chain. The immediate electron acceptor for the enzyme in this species is believed to be plastoquinone. Couples the redox reaction to proton translocation, and thus conserves the redox energy in a proton gradient. The polypeptide is NAD(P)H-quinone oxidoreductase subunit K, chloroplastic (Citrus sinensis (Sweet orange)).